The chain runs to 474 residues: Aspartate ammonia-lyase (474 aa).

The L-aspartate site is built by threonine 105, serine 144, threonine 145, asparagine 146, and threonine 191. Residues 322-331 (GSSIMPGKVN) are SS loop. Serine 323 acts as the Proton acceptor in catalysis. Serine 324 and lysine 329 together coordinate L-aspartate.

This sequence belongs to the class-II fumarase/aspartase family. Aspartase subfamily. In terms of assembly, homotetramer.

The enzyme catalyses L-aspartate = fumarate + NH4(+). It carries out the reaction L-phenylalanine = (E)-cinnamate + NH4(+). Does not require any divalent metal ion for activation of catalysis, but the activity is slightly increased in the presence of Mg(2+), Mn(2+), Ca(2+) or Co(2+). Catalyzes the reversible conversion of L-aspartate to fumarate and ammonia. Can also utilize L-phenylalanine to form cinnamic acid. Exhibits the highest specific activity towards L-phenylalanine, but catalytic efficiency is 3-fold higher with L-aspartate. This Pseudomonas aeruginosa (strain ATCC 15692 / DSM 22644 / CIP 104116 / JCM 14847 / LMG 12228 / 1C / PRS 101 / PAO1) protein is Aspartate ammonia-lyase.